The primary structure comprises 299 residues: Taste receptor type 2 member 5 (299 aa).

Position 1 (methionine 1) is a topological domain, extracellular. Residues 2 to 22 traverse the membrane as a helical segment; it reads LSAGLGLLMLVAVVEFLIGLI. The Cytoplasmic portion of the chain corresponds to 23–45; that stretch reads GNGVLVVWSFREWIRKFSWSSYN. Residues 46–66 traverse the membrane as a helical segment; it reads LIILGLAGCRFVLQWLIILDL. The Extracellular segment spans residues 67-82; sequence SLFPLFQSSRWLRYLS. A helical transmembrane segment spans residues 83–103; the sequence is IFWVLVSQASLWFATFLSVFY. Topologically, residues 104-127 are cytoplasmic; sequence CKKITTFDHPAYLWLKQRAYNLSL. Residues 128-148 form a helical membrane-spanning segment; that stretch reads WCLLGYFIINLLLTVQIGLMF. The Extracellular portion of the chain corresponds to 149-175; sequence YHPPQGNSSIRYPFESWQYLYAFRLNS. Asparagine 155 carries an N-linked (GlcNAc...) asparagine glycan. Residues 176-196 form a helical membrane-spanning segment; the sequence is GSYLPLMVFLVSSGMLIVSLY. The Cytoplasmic segment spans residues 197–223; sequence THHKKMKVHSAGRRDVRAKAHITALKS. A helical transmembrane segment spans residues 224–244; sequence LGCFLLLHLVYIMASPFSIAS. Residues 245–253 lie on the Extracellular side of the membrane; sequence KTYPPDLTS. Residues 254–274 traverse the membrane as a helical segment; the sequence is VFIWETLMAAYPSLHSLILIM. The Cytoplasmic segment spans residues 275–299; sequence GIPRVKQTCQKIXWKTVCARRCWGP.

The protein belongs to the G-protein coupled receptor T2R family.

The protein resides in the membrane. Receptor that may play a role in the perception of bitterness and is gustducin-linked. May play a role in sensing the chemical composition of the gastrointestinal content. The activity of this receptor may stimulate alpha gustducin, mediate PLC-beta-2 activation and lead to the gating of TRPM5. The protein is Taste receptor type 2 member 5 (TAS2R5) of Pan troglodytes (Chimpanzee).